A 1406-amino-acid polypeptide reads, in one-letter code: Sterol 3-beta-glucosyltransferase (1406 aa).

Residues Ala-83–Ser-231 form a disordered region. Residues Gly-110 to Ser-128 are compositionally biased toward polar residues. A compositionally biased stretch (low complexity) spans Ser-209–Ser-231. The GRAM 1 domain maps to Arg-236–Val-286. One can recognise a PH domain in the interval Val-286 to Phe-385. Disordered regions lie at residues Ala-457–Ala-558 and Leu-576–Pro-622. Basic and acidic residues predominate over residues His-468–Thr-478. 2 stretches are compositionally biased toward polar residues: residues Gly-490–Ala-499 and Ser-531–Trp-548. Residues Leu-576–Gly-587 show a composition bias toward basic and acidic residues. The GRAM 2 domain maps to Asp-730–Lys-796. UDP-alpha-D-glucose contacts are provided by Ser-917, Arg-918, Asp-920, Ala-1220, His-1222, His-1235, Gly-1239, Thr-1240, Asp-1259, and Gln-1260. Residues Gln-1334–Arg-1406 are disordered. Residues Ser-1336 to Ala-1349 show a composition bias toward low complexity. The span at Gln-1355–Met-1375 shows a compositional bias: acidic residues. Basic and acidic residues predominate over residues Asp-1376–Ser-1387. Residues Leu-1397 to Arg-1406 show a composition bias toward polar residues.

Belongs to the glycosyltransferase 28 family.

It localises to the cytoplasm. It is found in the preautophagosomal structure membrane. The enzyme catalyses a sterol + UDP-alpha-D-glucose = a sterol 3-beta-D-glucoside + UDP + H(+). The catalysed reaction is ergosterol + UDP-alpha-D-glucose = ergosteryl 3-beta-D-glucoside + UDP + H(+). Functionally, sterol glycosyltransferase responsible for the glycosylation of ergosterol to form ergosterol-glucoside. The protein is Sterol 3-beta-glucosyltransferase of Aspergillus clavatus (strain ATCC 1007 / CBS 513.65 / DSM 816 / NCTC 3887 / NRRL 1 / QM 1276 / 107).